A 254-amino-acid chain; its full sequence is Phosphoribosylaminoimidazole-succinocarboxamide synthase (254 aa).

This sequence belongs to the SAICAR synthetase family.

The catalysed reaction is 5-amino-1-(5-phospho-D-ribosyl)imidazole-4-carboxylate + L-aspartate + ATP = (2S)-2-[5-amino-1-(5-phospho-beta-D-ribosyl)imidazole-4-carboxamido]succinate + ADP + phosphate + 2 H(+). It participates in purine metabolism; IMP biosynthesis via de novo pathway; 5-amino-1-(5-phospho-D-ribosyl)imidazole-4-carboxamide from 5-amino-1-(5-phospho-D-ribosyl)imidazole-4-carboxylate: step 1/2. This chain is Phosphoribosylaminoimidazole-succinocarboxamide synthase, found in Sinorhizobium fredii (strain NBRC 101917 / NGR234).